The primary structure comprises 372 residues: MLEFSSQDCVFMQRALDLAAKGQYTTTPNPSVGCVLVKNGEIVGEGFHFKAGQPHAERVALAQAGENAKGATAYVTLEPCAHYGRTPPCALGLIEAGVVKVIAAMQDPNPQVAGKGLKMLSDAGIESTVNLLNDQAEKINKGFLKRMRQGMPFVQLKLAMSLDGRTAMASGESKWITGPDARSDVQKMRAKSSALLSTSTTVIADDPSLNVRWDEFPENLKTEYKKEWLRQPVRVILDSQHRIQPTHKLFLTHSPVWLVSSEPRDLTGFPDFCEQIIFPKENLLKELMRELGKRQINTLWVEAGANLSGSLIDAKLVDELIIYIAPKLLGDNARGLCQLPNLTKLADAPLWQLNELEQIGDDIKLTYTPKGV.

The interval 1 to 150 (MLEFSSQDCV…KGFLKRMRQG (150 aa)) is deaminase. In terms of domain architecture, CMP/dCMP-type deaminase spans 6–128 (SQDCVFMQRA…MLSDAGIEST (123 aa)). Zn(2+) is bound at residue His-55. Glu-57 (proton donor) is an active-site residue. Zn(2+) is bound by residues Cys-80 and Cys-89. Positions 151–372 (MPFVQLKLAM…IKLTYTPKGV (222 aa)) are reductase. NADP(+)-binding positions include Ala-159 and 166-169 (TAMA). Substrate is bound at residue Ser-173. Trp-175 contacts NADP(+). Arg-189 provides a ligand contact to substrate. Thr-201 and Asp-205 together coordinate NADP(+). Positions 209 and 212 each coordinate substrate. NADP(+) is bound at residue Ser-239. Glu-302 is a binding site for substrate. Residue 304–310 (GANLSGS) participates in NADP(+) binding.

The protein in the N-terminal section; belongs to the cytidine and deoxycytidylate deaminase family. It in the C-terminal section; belongs to the HTP reductase family. It depends on Zn(2+) as a cofactor.

It carries out the reaction 2,5-diamino-6-hydroxy-4-(5-phosphoribosylamino)-pyrimidine + H2O + H(+) = 5-amino-6-(5-phospho-D-ribosylamino)uracil + NH4(+). The catalysed reaction is 5-amino-6-(5-phospho-D-ribitylamino)uracil + NADP(+) = 5-amino-6-(5-phospho-D-ribosylamino)uracil + NADPH + H(+). Its pathway is cofactor biosynthesis; riboflavin biosynthesis; 5-amino-6-(D-ribitylamino)uracil from GTP: step 2/4. The protein operates within cofactor biosynthesis; riboflavin biosynthesis; 5-amino-6-(D-ribitylamino)uracil from GTP: step 3/4. Its function is as follows. Converts 2,5-diamino-6-(ribosylamino)-4(3h)-pyrimidinone 5'-phosphate into 5-amino-6-(ribosylamino)-2,4(1h,3h)-pyrimidinedione 5'-phosphate. In Haemophilus influenzae (strain ATCC 51907 / DSM 11121 / KW20 / Rd), this protein is Riboflavin biosynthesis protein RibD (ribD).